The following is an 862-amino-acid chain: Ubiquitin carboxyl-terminal hydrolase 13 (862 aa).

A UBP-type; degenerate zinc finger spans residues 182-290; that stretch reads QASKHAKSLV…KHLAHFGIDM (109 aa). 4 residues coordinate Zn(2+): Cys206, Cys209, Cys226, and His239. Positions 331 to 860 constitute a USP domain; sequence TGMKNLGNSC…LGYIYFYHRI (530 aa). Cys340 (nucleophile) is an active-site residue. UBA domains are found at residues 647 to 688 and 722 to 762; these read DIDE…IIAH and QPPE…IFSH. The active-site Proton acceptor is the His822.

This sequence belongs to the peptidase C19 family.

It carries out the reaction Thiol-dependent hydrolysis of ester, thioester, amide, peptide and isopeptide bonds formed by the C-terminal Gly of ubiquitin (a 76-residue protein attached to proteins as an intracellular targeting signal).. Specifically inhibited by spautin-1 (specific and potent autophagy inhibitor-1), a derivative of MBCQ that binds to USP13 and inhibits deubiquitinase activity. In terms of biological role, deubiquitinase that mediates deubiquitination of target proteins and is involved in various processes such as autophagy and endoplasmic reticulum-associated degradation (ERAD). The polypeptide is Ubiquitin carboxyl-terminal hydrolase 13 (USP13) (Gallus gallus (Chicken)).